The following is a 608-amino-acid chain: Albumin (608 aa).

Residues 1–18 (MKWVTFISLLLLFSSAYS) form the signal peptide. Positions 19–24 (RGVTRR) are excised as a propeptide. Albumin domains are found at residues 19–210 (RGVT…DALR), 211–403 (EKVL…EFKP), and 404–601 (LVEE…KLVA). His-27 is a Cu cation binding site. At Ser-29 the chain carries Phosphoserine. Positions 30 and 37 each coordinate Ca(2+). The cysteines at positions 77 and 86 are disulfide-linked. Ser-82 and Ser-89 each carry phosphoserine. Zn(2+) is bound at residue His-91. 6 cysteine pairs are disulfide-bonded: Cys-99–Cys-115, Cys-114–Cys-125, Cys-148–Cys-193, Cys-192–Cys-201, Cys-224–Cys-270, and Cys-269–Cys-277. An N6-succinyllysine modification is found at Lys-229. Glu-268 serves as a coordination point for Ca(2+). The Zn(2+) site is built by His-271 and Asp-273. Ca(2+) is bound by residues Asp-273, Glu-276, Asp-279, and Asp-283. Intrachain disulfides connect Cys-289-Cys-303, Cys-302-Cys-313, Cys-340-Cys-385, Cys-384-Cys-393, Cys-416-Cys-462, Cys-461-Cys-472, Cys-485-Cys-501, and Cys-500-Cys-511. Ser-443 is subject to Phosphoserine. Residues Thr-444 and Thr-446 each carry the phosphothreonine modification. An N6-succinyllysine modification is found at Lys-460. Ser-513 carries the post-translational modification Phosphoserine. 2 cysteine pairs are disulfide-bonded: Cys-538-Cys-583 and Cys-582-Cys-591. An N6-methyllysine modification is found at Lys-558. Thr-570 carries the post-translational modification Phosphothreonine. N6-succinyllysine is present on Lys-588.

This sequence belongs to the ALB/AFP/VDB family. In terms of assembly, interacts with FCGRT; this interaction regulates ALB homeostasis. Interacts with TASOR. In plasma, occurs in a covalently-linked complex with chromophore-bound alpha-1-microglobulin; this interaction does not prevent fatty acid binding to ALB. Phosphorylated by FAM20C in the extracellular medium. In terms of tissue distribution, plasma.

It is found in the secreted. Binds water, Ca(2+), Na(+), K(+), fatty acids, hormones, bilirubin and drugs. Its main function is the regulation of the colloidal osmotic pressure of blood. Major zinc transporter in plasma, typically binds about 80% of all plasma zinc. Major calcium and magnesium transporter in plasma, binds approximately 45% of circulating calcium and magnesium in plasma. Potentially has more than two calcium-binding sites and might additionally bind calcium in a non-specific manner. The shared binding site between zinc and calcium at residue Asp-273 suggests a crosstalk between zinc and calcium transport in the blood. The rank order of affinity is zinc &gt; calcium &gt; magnesium. Binds to the bacterial siderophore enterobactin and inhibits enterobactin-mediated iron uptake of E.coli from ferric transferrin, and may thereby limit the utilization of iron and growth of enteric bacteria such as E.coli. Does not prevent iron uptake by the bacterial siderophore aerobactin. The chain is Albumin (ALB) from Felis catus (Cat).